Here is a 290-residue protein sequence, read N- to C-terminus: Light-independent protochlorophyllide reductase iron-sulfur ATP-binding protein (290 aa).

Residues 10 to 15 (GIGKST) and K39 each bind ATP. S14 serves as a coordination point for Mg(2+). Residues C95 and C129 each contribute to the [4Fe-4S] cluster site. 180–181 (NR) contributes to the ATP binding site.

The protein belongs to the NifH/BchL/ChlL family. Homodimer. Protochlorophyllide reductase is composed of three subunits; ChlL, ChlN and ChlB. Requires [4Fe-4S] cluster as cofactor.

Its subcellular location is the plastid. The protein localises to the chloroplast. The enzyme catalyses chlorophyllide a + oxidized 2[4Fe-4S]-[ferredoxin] + 2 ADP + 2 phosphate = protochlorophyllide a + reduced 2[4Fe-4S]-[ferredoxin] + 2 ATP + 2 H2O. It functions in the pathway porphyrin-containing compound metabolism; chlorophyll biosynthesis (light-independent). Its function is as follows. Component of the dark-operative protochlorophyllide reductase (DPOR) that uses Mg-ATP and reduced ferredoxin to reduce ring D of protochlorophyllide (Pchlide) to form chlorophyllide a (Chlide). This reaction is light-independent. The L component serves as a unique electron donor to the NB-component of the complex, and binds Mg-ATP. In Porphyra purpurea (Red seaweed), this protein is Light-independent protochlorophyllide reductase iron-sulfur ATP-binding protein.